The primary structure comprises 179 residues: Inner membrane-spanning protein YciB (179 aa).

The next 5 membrane-spanning stretches (helical) occupy residues 22–42, 50–70, 76–96, 121–141, and 149–169; these read IYAATAALIVATAIVLIYSWV, MALITFVLVVVFGGLTLFFHN, WKVTVIYALFAGALLVSQWVM, LAWAVFFILCGLANIYIAFWL, and FKVFGLTALTLIFTLLSGIYI.

This sequence belongs to the YciB family.

The protein localises to the cell inner membrane. Functionally, plays a role in cell envelope biogenesis, maintenance of cell envelope integrity and membrane homeostasis. In Shigella boydii serotype 18 (strain CDC 3083-94 / BS512), this protein is Inner membrane-spanning protein YciB.